The primary structure comprises 399 residues: Zona occludens toxin (399 aa).

Its function is as follows. Increases the permeability of the small intestine mucosa by affecting the structure of intercellular tight junctions (zonula occludens). The polypeptide is Zona occludens toxin (zot) (Vibrio cholerae serotype O1 (strain ATCC 39315 / El Tor Inaba N16961)).